A 217-amino-acid polypeptide reads, in one-letter code: 3-demethoxyubiquinol 3-hydroxylase (217 aa).

Fe cation is bound by residues Glu66, Glu96, His99, Glu148, Glu180, and His183.

This sequence belongs to the COQ7 family. Requires Fe cation as cofactor.

The protein localises to the cell membrane. The catalysed reaction is a 5-methoxy-2-methyl-3-(all-trans-polyprenyl)benzene-1,4-diol + AH2 + O2 = a 3-demethylubiquinol + A + H2O. It participates in cofactor biosynthesis; ubiquinone biosynthesis. Its function is as follows. Catalyzes the hydroxylation of 2-nonaprenyl-3-methyl-6-methoxy-1,4-benzoquinol during ubiquinone biosynthesis. This Xanthomonas axonopodis pv. citri (strain 306) protein is 3-demethoxyubiquinol 3-hydroxylase.